The sequence spans 745 residues: Junction plakoglobin (745 aa).

N-acetylmethionine is present on Met-1. The O-linked (GlcNAc) threonine glycan is linked to Thr-14. Phosphoserine is present on residues Ser-99 and Ser-125. 12 ARM repeats span residues 132–171, 172–215, 216–255, 258–297, 298–341, 342–381, 383–420, 423–464, 470–510, 512–551, 574–613, and 615–661; these read NYQDDAELATRALPELTKLLNDEDPVVVTKAAMIVNQLSK, KEAS…LSHH, REGLLAIFKSGGIPALVRMLSSPVESVLFYAITTLHNLLL, EGAKMAVRLADGLQKMVPLLNKNNPKFLAITTDCLQLLAY, GNQE…LSVC, PSNKPAIVEAGGMQALGKHLTSNSPRLVQNCLWTLRNLSD, ATKQEGLESVLKILVNQLSVDDVNVLTCATGTLSNLTC, SKNK…HLTS, EMAQ…NLAL, PANHAPLQEAAVIPRLVQLLVKAHQDAQRHVAAGTQQPYT, PMNRMEIFRLNTIPLFVQLLYSSVENIQRVAAGVLCELAQ, and KEAA…PDYR. Residues 132–297 form an interaction with DSC1 and DSG1 region; it reads NYQDDAELAT…TTDCLQLLAY (166 aa). A Phosphoserine modification is found at Ser-182. Residues 574 to 661 are interaction with DSC1; sequence PMNRMEIFRL…ISEDKNPDYR (88 aa). Ser-665 and Ser-730 each carry phosphoserine.

It belongs to the beta-catenin family. In terms of assembly, homodimer. Component of an E-cadherin/catenin adhesion complex composed of at least E-cadherin/CDH1 and gamma-catenin/JUP, and possibly alpha-catenin/CTNNA1; the complex is located to adherens junctions. The stable association of CTNNA1 is controversial as CTNNA1 was shown not to bind to F-actin when assembled in the complex. Interacts with MUC1. Interacts with CAV1. Interacts with PTPRJ. Interacts with DSG1. Interacts with DSC1 and DSC2. Interacts with PKP2. Interacts with PKP3 (via N-terminus); the interaction is required for PKP3 localization to desmosome cell-cell junctions. Interacts with DSG4. Post-translationally, may be phosphorylated by FER. In terms of tissue distribution, expressed in the mammary epithelium (at protein level).

It is found in the cell junction. The protein resides in the adherens junction. The protein localises to the desmosome. Its subcellular location is the cytoplasm. It localises to the cytoskeleton. It is found in the cell membrane. The protein resides in the nucleus. In terms of biological role, common junctional plaque protein. The membrane-associated plaques are architectural elements in an important strategic position to influence the arrangement and function of both the cytoskeleton and the cells within the tissue. The presence of plakoglobin in both the desmosomes and in the intermediate junctions suggests that it plays a central role in the structure and function of submembranous plaques. Acts as a substrate for VE-PTP and is required by it to stimulate VE-cadherin function in endothelial cells. Can replace beta-catenin in E-cadherin/catenin adhesion complexes which are proposed to couple cadherins to the actin cytoskeleton. In Mus musculus (Mouse), this protein is Junction plakoglobin.